The sequence spans 441 residues: Protein MONOCULM 1 (441 aa).

Residues 1–33 are disordered; sequence MLRSLHSSSSSDTDNNSGGCKNNGGGGGEAAAA. Over residues 7–20 the composition is skewed to low complexity; sequence SSSSSDTDNNSGGC. Positions 21-33 are enriched in gly residues; sequence KNNGGGGGEAAAA. The region spanning 41–437 is the GRAS domain; it reads RAVAAAAPST…RPLLSVSAWQ (397 aa). Residues 48-126 are leucine repeat I (LRI); sequence PSTRDLLLAC…GAARPASSGA (79 aa). The segment at 127 to 195 is VHIID; it reads YLAFNQIAPF…LGPPEVRVTG (69 aa). The VHIID signature appears at 158–162; that stretch reads VHILD. Positions 205–256 are leucine repeat II (LRII); that stretch reads RTGNRLRAFARSIHLPFHFTPLLLSCATTAPHHVAGTSTGAAAAASTAAAAT. A PFYRE region spans residues 266 to 361; the sequence is LAVNCVMFLH…QEVLGREIEA (96 aa). The SAW stretch occupies residues 364-437; that stretch reads GPSGGRWWRG…RPLLSVSAWQ (74 aa).

It belongs to the GRAS family. As to expression, expressed in a small number of epidermal or subepidermal cells at the leaf axils, in axillary meristems and the entire tiller buds. Undetected in the shoot apical meristem.

Its subcellular location is the nucleus. Functionally, putative transcription regulator that controls rice tillering by initiating axillary buds and promoting their outgrowth. Rice tiller is a specialized grain-bearing branch that is formed on the unelongated basal internode and grows independently of the mother stem (culm) by means of its own adventitious roots. The protein is Protein MONOCULM 1 of Oryza sativa subsp. japonica (Rice).